The chain runs to 202 residues: Small ribosomal subunit protein uS4c (202 aa).

The 61-residue stretch at 90-150 (MRLDNVIFRL…NQRKSQAIIN (61 aa)) folds into the S4 RNA-binding domain.

This sequence belongs to the universal ribosomal protein uS4 family. Part of the 30S ribosomal subunit. Contacts protein S5. The interaction surface between S4 and S5 is involved in control of translational fidelity.

The protein localises to the plastid. It is found in the chloroplast. Its function is as follows. One of the primary rRNA binding proteins, it binds directly to 16S rRNA where it nucleates assembly of the body of the 30S subunit. Functionally, with S5 and S12 plays an important role in translational accuracy. The polypeptide is Small ribosomal subunit protein uS4c (rps4) (Canalohypopterygium tamariscinum (Moss)).